An 84-amino-acid chain; its full sequence is Large ribosomal subunit protein bL27 (84 aa).

Residues 1–11 (MATTKAGGSTK) show a composition bias toward polar residues. The interval 1-20 (MATTKAGGSTKNGRDSHSKR) is disordered.

It belongs to the bacterial ribosomal protein bL27 family.

The chain is Large ribosomal subunit protein bL27 from Mycoplasmopsis synoviae (strain 53) (Mycoplasma synoviae).